Reading from the N-terminus, the 167-residue chain is Small ribosomal subunit protein uS7c (167 aa).

The protein belongs to the universal ribosomal protein uS7 family. As to quaternary structure, part of the 30S ribosomal subunit.

The protein resides in the plastid. It localises to the chloroplast. One of the primary rRNA binding proteins, it binds directly to 16S rRNA where it nucleates assembly of the head domain of the 30S subunit. The polypeptide is Small ribosomal subunit protein uS7c (rps7) (Tetradesmus obliquus (Green alga)).